A 151-amino-acid polypeptide reads, in one-letter code: Deoxyuridine 5'-triphosphate nucleotidohydrolase (151 aa).

Residues 70–72 (RSG), Asn83, 87–89 (LID), and Met97 contribute to the substrate site.

Belongs to the dUTPase family. The cofactor is Mg(2+).

The catalysed reaction is dUTP + H2O = dUMP + diphosphate + H(+). The protein operates within pyrimidine metabolism; dUMP biosynthesis; dUMP from dCTP (dUTP route): step 2/2. Its function is as follows. This enzyme is involved in nucleotide metabolism: it produces dUMP, the immediate precursor of thymidine nucleotides and it decreases the intracellular concentration of dUTP so that uracil cannot be incorporated into DNA. This is Deoxyuridine 5'-triphosphate nucleotidohydrolase from Azotobacter vinelandii (strain DJ / ATCC BAA-1303).